We begin with the raw amino-acid sequence, 376 residues long: Putative glutamate--cysteine ligase 2-1 (376 aa).

The protein belongs to the glutamate--cysteine ligase type 2 family. YbdK subfamily.

The enzyme catalyses L-cysteine + L-glutamate + ATP = gamma-L-glutamyl-L-cysteine + ADP + phosphate + H(+). In terms of biological role, ATP-dependent carboxylate-amine ligase which exhibits weak glutamate--cysteine ligase activity. The polypeptide is Putative glutamate--cysteine ligase 2-1 (Rubrobacter xylanophilus (strain DSM 9941 / JCM 11954 / NBRC 16129 / PRD-1)).